Reading from the N-terminus, the 103-residue chain is Methane monooxygenase component D (103 aa).

In terms of assembly, the soluble methane monooxygenase (sMMO) consists of four components A/MMOH (composed of alpha/MmoX, beta/MmoY and gamma/MmoZ), B/MMOB (MmoB), C/MMOR (MmoC) and D/MMOD (MmoD).

This Methylococcus capsulatus (strain ATCC 33009 / NCIMB 11132 / Bath) protein is Methane monooxygenase component D (mmoD).